A 750-amino-acid polypeptide reads, in one-letter code: von Willebrand factor A domain-containing protein DDB_G0292188 (750 aa).

The VWFA domain occupies 17–249; the sequence is EIKTVFNSDS…IKDDLLLDVV (233 aa). Low complexity-rich tracts occupy residues 586–595 and 603–645; these read SINDNNNSFN and PFFE…SSAS. A disordered region spans residues 586–657; that stretch reads SINDNNNSFN…PPPSQMLNEQ (72 aa).

The polypeptide is von Willebrand factor A domain-containing protein DDB_G0292188 (Dictyostelium discoideum (Social amoeba)).